We begin with the raw amino-acid sequence, 301 residues long: GTPase Era (301 aa).

An Era-type G domain is found at 7 to 175; sequence YCGFIAIVGR…AAIVRKHLPE (169 aa). Residues 15 to 22 are G1; sequence GRPNVGKS. 15-22 lines the GTP pocket; it reads GRPNVGKS. The tract at residues 41 to 45 is G2; sequence QTTRH. The tract at residues 62-65 is G3; it reads DTPG. GTP-binding positions include 62–66 and 124–127; these read DTPGL and NKVD. A G4 region spans residues 124–127; that stretch reads NKVD. Residues 154–156 are G5; sequence ISA. One can recognise a KH type-2 domain in the interval 206–283; that stretch reads LGAELPYSVT…HLELWVKVKS (78 aa).

Belongs to the TRAFAC class TrmE-Era-EngA-EngB-Septin-like GTPase superfamily. Era GTPase family. Monomer.

It localises to the cytoplasm. The protein resides in the cell inner membrane. In terms of biological role, an essential GTPase that binds both GDP and GTP, with rapid nucleotide exchange. Plays a role in 16S rRNA processing and 30S ribosomal subunit biogenesis and possibly also in cell cycle regulation and energy metabolism. This Shigella dysenteriae serotype 1 (strain Sd197) protein is GTPase Era.